Here is a 411-residue protein sequence, read N- to C-terminus: Imidazolonepropionase (411 aa).

Residues histidine 75 and histidine 77 each coordinate Fe(3+). Histidine 75 and histidine 77 together coordinate Zn(2+). 4-imidazolone-5-propanoate is bound by residues arginine 84, tyrosine 147, and histidine 180. N-formimidoyl-L-glutamate is bound at residue tyrosine 147. Histidine 245 serves as a coordination point for Fe(3+). Histidine 245 contacts Zn(2+). Glutamine 248 lines the 4-imidazolone-5-propanoate pocket. Aspartate 320 contacts Fe(3+). Aspartate 320 lines the Zn(2+) pocket. Positions 322 and 324 each coordinate N-formimidoyl-L-glutamate. Threonine 325 provides a ligand contact to 4-imidazolone-5-propanoate.

It belongs to the metallo-dependent hydrolases superfamily. HutI family. Requires Zn(2+) as cofactor. Fe(3+) serves as cofactor.

Its subcellular location is the cytoplasm. The enzyme catalyses 4-imidazolone-5-propanoate + H2O = N-formimidoyl-L-glutamate. It participates in amino-acid degradation; L-histidine degradation into L-glutamate; N-formimidoyl-L-glutamate from L-histidine: step 3/3. Catalyzes the hydrolytic cleavage of the carbon-nitrogen bond in imidazolone-5-propanoate to yield N-formimidoyl-L-glutamate. It is the third step in the universal histidine degradation pathway. This chain is Imidazolonepropionase, found in Aeromonas hydrophila subsp. hydrophila (strain ATCC 7966 / DSM 30187 / BCRC 13018 / CCUG 14551 / JCM 1027 / KCTC 2358 / NCIMB 9240 / NCTC 8049).